A 290-amino-acid polypeptide reads, in one-letter code: Acetyl-coenzyme A carboxylase carboxyl transferase subunit beta (290 aa).

The region spanning 28-290 is the CoA carboxyltransferase N-terminal domain; that stretch reads VMTKCPQCKK…GGGESGWWRN (263 aa). Positions 32, 35, 51, and 54 each coordinate Zn(2+). The C4-type zinc-finger motif lies at 32-54; sequence CPQCKKIMYTKELVKNLRVCLSC.

It belongs to the AccD/PCCB family. In terms of assembly, acetyl-CoA carboxylase is a heterohexamer composed of biotin carboxyl carrier protein (AccB), biotin carboxylase (AccC) and two subunits each of ACCase subunit alpha (AccA) and ACCase subunit beta (AccD). The cofactor is Zn(2+).

The protein localises to the cytoplasm. It carries out the reaction N(6)-carboxybiotinyl-L-lysyl-[protein] + acetyl-CoA = N(6)-biotinyl-L-lysyl-[protein] + malonyl-CoA. Its pathway is lipid metabolism; malonyl-CoA biosynthesis; malonyl-CoA from acetyl-CoA: step 1/1. Functionally, component of the acetyl coenzyme A carboxylase (ACC) complex. Biotin carboxylase (BC) catalyzes the carboxylation of biotin on its carrier protein (BCCP) and then the CO(2) group is transferred by the transcarboxylase to acetyl-CoA to form malonyl-CoA. This chain is Acetyl-coenzyme A carboxylase carboxyl transferase subunit beta, found in Geobacillus thermodenitrificans (strain NG80-2).